A 309-amino-acid polypeptide reads, in one-letter code: Aspartate carbamoyltransferase catalytic subunit (309 aa).

Carbamoyl phosphate is bound by residues R56 and T57. Residue K84 coordinates L-aspartate. Carbamoyl phosphate is bound by residues R106, H136, and Q139. 2 residues coordinate L-aspartate: R169 and R221. Carbamoyl phosphate contacts are provided by A264 and P265.

The protein belongs to the aspartate/ornithine carbamoyltransferase superfamily. ATCase family. In terms of assembly, heterododecamer (2C3:3R2) of six catalytic PyrB chains organized as two trimers (C3), and six regulatory PyrI chains organized as three dimers (R2).

The enzyme catalyses carbamoyl phosphate + L-aspartate = N-carbamoyl-L-aspartate + phosphate + H(+). Its pathway is pyrimidine metabolism; UMP biosynthesis via de novo pathway; (S)-dihydroorotate from bicarbonate: step 2/3. Functionally, catalyzes the condensation of carbamoyl phosphate and aspartate to form carbamoyl aspartate and inorganic phosphate, the committed step in the de novo pyrimidine nucleotide biosynthesis pathway. In Limosilactobacillus reuteri subsp. reuteri (strain JCM 1112) (Lactobacillus reuteri), this protein is Aspartate carbamoyltransferase catalytic subunit.